Reading from the N-terminus, the 56-residue chain is Small ribosomal subunit protein eS31 (56 aa).

Zn(2+) contacts are provided by Cys-28, Cys-31, Cys-46, and Cys-49. A C4-type zinc finger spans residues Cys-28–Cys-49.

This sequence belongs to the eukaryotic ribosomal protein eS31 family. As to quaternary structure, part of the 30S ribosomal subunit. It depends on Zn(2+) as a cofactor.

The polypeptide is Small ribosomal subunit protein eS31 (Thermococcus gammatolerans (strain DSM 15229 / JCM 11827 / EJ3)).